A 360-amino-acid polypeptide reads, in one-letter code: Proline-rich protein 11 (360 aa).

Disordered regions lie at residues 20–43 and 174–201; these read KKKE…SPER and PPTL…PPLA. Residue Thr33 is modified to Phosphothreonine. Phosphoserine is present on Ser40. Residues 175 to 201 are compositionally biased toward pro residues; that stretch reads PTLPQPASHFPPPPPPPPLPPPPPPLA. The Phosphodegron signature appears at 285-291; that stretch reads LITPGKS. Phosphothreonine is present on Thr287. Ser291 is modified (phosphoserine). Positions 296 to 304 match the D-box motif; it reads RKLLRKVDV. Positions 316-318 match the KEN box motif; the sequence is KEN. Residues 325–330 carry the Phosphodegron motif; sequence LTPVMT. Residues 340–360 are disordered; sequence AHPRSPTPTLPLSTSSFDEQN. Ser344 carries the phosphoserine modification. Phosphothreonine is present on residues Thr346 and Thr348. Positions 349 to 360 are enriched in low complexity; that stretch reads LPLSTSSFDEQN.

Post-translationally, ubiquitinated. Rapidly degraded by the proteasome; degradation may involve FBXW7-specific phosphorylated phosphodegron motifs. In terms of tissue distribution, ubiquitously expressed.

It localises to the cytoplasm. The protein localises to the nucleus. In terms of biological role, plays a critical role in cell cycle progression. This chain is Proline-rich protein 11 (PRR11), found in Homo sapiens (Human).